Reading from the N-terminus, the 224-residue chain is Deoxyribose-phosphate aldolase (224 aa).

The active-site Proton donor/acceptor is D92. The active-site Schiff-base intermediate with acetaldehyde is K154. Catalysis depends on K183, which acts as the Proton donor/acceptor.

This sequence belongs to the DeoC/FbaB aldolase family. DeoC type 1 subfamily.

It localises to the cytoplasm. It catalyses the reaction 2-deoxy-D-ribose 5-phosphate = D-glyceraldehyde 3-phosphate + acetaldehyde. It participates in carbohydrate degradation; 2-deoxy-D-ribose 1-phosphate degradation; D-glyceraldehyde 3-phosphate and acetaldehyde from 2-deoxy-alpha-D-ribose 1-phosphate: step 2/2. Its function is as follows. Catalyzes a reversible aldol reaction between acetaldehyde and D-glyceraldehyde 3-phosphate to generate 2-deoxy-D-ribose 5-phosphate. This Histophilus somni (strain 129Pt) (Haemophilus somnus) protein is Deoxyribose-phosphate aldolase.